A 1159-amino-acid chain; its full sequence is CRISPR-associated endoribonuclease Cas13a (1159 aa).

Residues 1-11 (MKVTKVGGISH) form a binds crRNA repeat and spacer region. The segment at 1-170 (MKVTKVGGIS…NNIEKVEGKS (170 aa)) is NTD. Binds crRNA repeat stretches follow at residues 139-151 (NKIN…FEKN), 172-176 (RNIIY), 224-233 (REFYHEIIGR), 271-276 (QVFYKY), 294-297 (HFVE), and 301-305 (SQLLK). The segment at 171–360 (KRNIIYDYYR…YNYYLQDGEI (190 aa)) is helical-1. Residues 319-328 (KIKRIFEYQN) are binds crRNA processing site. Binds crRNA repeat regions lie at residues 336-340 (KLLNK) and 371-378 (QNEAFLRN). The segment at 361–508 (ATSDFIARNR…SKKMFQNEIN (148 aa)) is HEPN-like fold 1-I. Residues Arg-472 and His-477 each act as for target RNA cleavage in the active site. The helical-2 stretch occupies residues 509-751 (EKKLKLKIFR…EFLREIKLGN (243 aa)). The segment at 519-522 (QLNS) is binds target RNA. Residues 547–558 (NKNIPFVPSFTK) are binds crRNA spacer. Residues 590 to 597 (DAQIYLLK) are binds target RNA. The tract at residues 718–722 (KQEFD) is binds crRNA spacer. The segment at 752 to 813 (ILKYTERLNM…NLDNNRVTED (62 aa)) is HEPN-like fold 1-II. Residues 780-783 (SLEK) form a binds crRNA repeat region. The tract at residues 804–810 (NLDNNRV) is binds crRNA spacer and target RNA. The tract at residues 814-946 (FELEADEIGK…EYTHLKNKVE (133 aa)) is linker. Binds crRNA spacer stretches follow at residues 845–857 (KIYF…IKHR) and 938–942 (YTHLK). Positions 880-946 (YKISIEELKK…EYTHLKNKVE (67 aa)) form a coiled coil. The interval 947–1159 (FNELNLLQGL…YKMEEKKSEN (213 aa)) is HEPN-like fold 2. Residues 962 to 963 (HR) are binds crRNA repeat. A binds 3'-end of target RNA, in adjacent protein region spans residues 995 to 998 (FENK). Active-site for target RNA cleavage residues include Arg-1048 and His-1053. 2 binds crRNA processing site regions span residues 1072 to 1082 (RKLLSYDRKLK) and 1104 to 1108 (IGADK).

The protein belongs to the CRISPR-associated endoribonuclease Cas13a family. As to quaternary structure, crystals show the 3'-end of target RNA interacting with an adjacent protein molecule, and mutagenesis of those amino acid residues decreases target RNA cleavage, but it is not clear if this is physiological. The cofactor is a divalent metal cation.

With respect to regulation, target RNA acts as an activator for non-specific ssRNA cleavage; the target RNA and complementary crRNA must both be at least 20 nucleotides long to activate the HEPN-like catalytic pocket for RNase activity. Its function is as follows. CRISPR (clustered regularly interspaced short palindromic repeat), is an adaptive immune system that provides protection against mobile genetic elements (viruses, transposable elements and conjugative plasmids). CRISPR clusters contain sequences complementary to antecedent mobile elements (spacer sequences) and target invading nucleic acids. Unlike many single-component effectors, this CRISPR-Cas system targets RNA. CRISPR clusters are transcribed from pre-CRISPR RNA (crRNA) and processed into crRNA by this protein. pre-crRNA processing yields a 5'-OH and probably a 2',3'-cyclic phosphate. Also cleaves pre-crRNA from several other type VI-A CRISPR systems. Cleaves linear target ssRNA in a crRNA-dependent fashion, preferentially before U residues. Cleavage of target ssRNA is about 80-fold faster than pre-crRNA processing and uses a different active site. Binding a viable target RNA target activates this protein for non-specific RNA degradation in vitro (called collateral RNA degradation). Activation occurs with 10 fM target RNA. crRNA maturation is not essential for activation of RNA degradation, but lack of mature crRNA (due to mutagenesis) decreases activation levels. This system has a 3' protospacer flanking site in the target RNA (PFS), which is C and unavailable to base pair with crRNA (PFS is equivalent to PAM, the protospacer adjacent motif). This chain is CRISPR-associated endoribonuclease Cas13a, found in Leptotrichia buccalis (strain ATCC 14201 / DSM 1135 / JCM 12969 / NCTC 10249 / C-1013-b).